We begin with the raw amino-acid sequence, 402 residues long: Tyrosine--tRNA ligase (402 aa).

Residues 48–57 carry the 'HIGH' region motif; it reads PTGSDIHLGH. The 'KMSKS' region signature appears at 235–239; the sequence is KMSKS. K238 serves as a coordination point for ATP. Positions 338–402 constitute an S4 RNA-binding domain; the sequence is AKAFYLVSAV…GKKKFVRLVL (65 aa).

The protein belongs to the class-I aminoacyl-tRNA synthetase family. TyrS type 2 subfamily. As to quaternary structure, homodimer.

Its subcellular location is the cytoplasm. It catalyses the reaction tRNA(Tyr) + L-tyrosine + ATP = L-tyrosyl-tRNA(Tyr) + AMP + diphosphate + H(+). Its function is as follows. Catalyzes the attachment of tyrosine to tRNA(Tyr) in a two-step reaction: tyrosine is first activated by ATP to form Tyr-AMP and then transferred to the acceptor end of tRNA(Tyr). This Synechococcus elongatus (strain ATCC 33912 / PCC 7942 / FACHB-805) (Anacystis nidulans R2) protein is Tyrosine--tRNA ligase.